Consider the following 113-residue polypeptide: EVKLEESGGGLVQPGGSMKLSCVASGFTFSNYWMNWVRQSPEKGLEWVAEIRLKSHNYATHYAESVKGRFTISRDDSKSSVYLQMNNLRAEDTGIYYCTTGFAYWGQGTLVTV.

The Ig-like domain maps to 1 to 113; sequence EVKLEESGGG…YWGQGTLVTV (113 aa). A disulfide bridge links Cys-22 with Cys-98.

The protein is Ig heavy chain V-III region A4 of Mus musculus (Mouse).